The sequence spans 384 residues: Conidiophore development protein hymA (384 aa).

A compositionally biased stretch (basic and acidic residues) spans 362 to 374; it reads EPIEPSRSAREPS. The disordered stretch occupies residues 362–384; sequence EPIEPSRSAREPSRSTANTTTVA.

The protein belongs to the Mo25 family.

It is found in the cytoplasm. Required for conidiophore development. The chain is Conidiophore development protein hymA (hymA) from Emericella nidulans (strain FGSC A4 / ATCC 38163 / CBS 112.46 / NRRL 194 / M139) (Aspergillus nidulans).